The sequence spans 292 residues: NAD kinase (292 aa).

D73 serves as the catalytic Proton acceptor. NAD(+) is bound by residues D73–G74, N147–E148, H158, R175, D177, T188–S193, and Q247.

The protein belongs to the NAD kinase family. Requires a divalent metal cation as cofactor.

The protein resides in the cytoplasm. It carries out the reaction NAD(+) + ATP = ADP + NADP(+) + H(+). Involved in the regulation of the intracellular balance of NAD and NADP, and is a key enzyme in the biosynthesis of NADP. Catalyzes specifically the phosphorylation on 2'-hydroxyl of the adenosine moiety of NAD to yield NADP. The polypeptide is NAD kinase (Salmonella agona (strain SL483)).